The chain runs to 615 residues: Dihydroxy-acid dehydratase (615 aa).

Position 81 (Asp-81) interacts with Mg(2+). Residue Cys-122 coordinates [2Fe-2S] cluster. Mg(2+) contacts are provided by Asp-123 and Lys-124. An N6-carboxylysine modification is found at Lys-124. A [2Fe-2S] cluster-binding site is contributed by Cys-195. Mg(2+) is bound at residue Glu-491. Ser-517 acts as the Proton acceptor in catalysis.

Belongs to the IlvD/Edd family. As to quaternary structure, homodimer. Requires [2Fe-2S] cluster as cofactor. It depends on Mg(2+) as a cofactor.

It carries out the reaction (2R)-2,3-dihydroxy-3-methylbutanoate = 3-methyl-2-oxobutanoate + H2O. The catalysed reaction is (2R,3R)-2,3-dihydroxy-3-methylpentanoate = (S)-3-methyl-2-oxopentanoate + H2O. The protein operates within amino-acid biosynthesis; L-isoleucine biosynthesis; L-isoleucine from 2-oxobutanoate: step 3/4. It functions in the pathway amino-acid biosynthesis; L-valine biosynthesis; L-valine from pyruvate: step 3/4. In terms of biological role, functions in the biosynthesis of branched-chain amino acids. Catalyzes the dehydration of (2R,3R)-2,3-dihydroxy-3-methylpentanoate (2,3-dihydroxy-3-methylvalerate) into 2-oxo-3-methylpentanoate (2-oxo-3-methylvalerate) and of (2R)-2,3-dihydroxy-3-methylbutanoate (2,3-dihydroxyisovalerate) into 2-oxo-3-methylbutanoate (2-oxoisovalerate), the penultimate precursor to L-isoleucine and L-valine, respectively. In Novosphingobium aromaticivorans (strain ATCC 700278 / DSM 12444 / CCUG 56034 / CIP 105152 / NBRC 16084 / F199), this protein is Dihydroxy-acid dehydratase.